The primary structure comprises 91 residues: Non-structural protein 3a (91 aa).

The signal sequence occupies residues 1–19 (MVSFNATAILLVLVANAFS).

The chain is Non-structural protein 3a from Tylonycteris pachypus (Lesser bamboo bat).